The following is a 1055-amino-acid chain: MSIYHGIIGSSDHIQNIFPPPSPRKNISLSTNNISSLTTPKNFTAIVVTKPLSQSTTSTQEMMNTSDILFDIQQPLSPQHHSRQIQQQQHEKITPEEEERRSDELQKILLDTIPILIKGVETLGIEVEQICNGDSANEKRSNCQVLVDIQKTLREYPRGMGYRSKTIPSNIVGKPKLIAFRHSMDQLVWENISKLSILKDFVEFTLDFQKLCVIGISIRDAINSFVNNKCEYLIKGFEFNNTNSILSGINIHHHLNHQPGASTPRPSHSSSSSLSHSLSSSPMSQSLPSSLTSGGVSLLNTSDDAIVPSLSSGNDDSSGSSLSSSDANVISINISTVIQNGVRDEINNTSISALKKSQKQQPVVLSRAPKQVMESTRILVDTVVNRKCMYREEKASIYREMMNDRLTLLKEDPKKFKQQLLQQRRQKLTNSDQPHETDYNEDFNLNNNSTNNNNNIKKESNGSSVNSQTTTTTTTTNNNNNNISPQHSGTSGSPSDKENSPIFSPGYLSTSPPKSPPKSPEFLGVPIGKKAHLLGHARSFSADTHATKEAAANQHHHSHNNIGSVLSPPLSSQNERILRNYKLLSSSPSSSSSAVVTNPVSLTTQLQQQQQQQQQQQTTSQPTQPPPSEYQLLDLEWEEPIDSDFILPCKGYKIDSGNSKCQQVNYDELIVLYTDEDEYHYCDDFCSLEHFNFLGVNKNQPDNPMCISVVVQHDTNELLYIIRTGEKDEKYRLSLPYGKKEISSKDMLKMIKKSRFNQMSNFKLKEVKSDQNQQFIKQLIQFEAKNIHKTFKFGVLYCSENQGTDENELYSNSSTSDEFQEFLRILGDRVQLQGWTKYRGGLDIKDNTTGTHSIYKKWRDFEIMYHVAPMIPCRAADEQSVERKRHLGNDIVLIIYKEGNTKLFDPSIIKSNFNHIFAVVQKVDPIPNVDGAAVINLGNSFNNNNSSNNNNNNNNNNNNNNNSDSNLPTTNNLPIITNVNYKISIGCKEEVQNFGPAFPKNHIFSTSTGENLTDFLLTRLINGERATLKSPVFAQKLKRTRKEFLHSFITDFGSE.

Disordered regions lie at residues 76-100, 256-292, 418-525, 544-570, 603-629, and 943-969; these read LSPQ…EEER, NHQP…SSLT, QQLL…FLGV, THAT…SPPL, TTQL…PPSE, and NNNS…NLPT. A compositionally biased stretch (basic and acidic residues) spans 89-100; the sequence is QHEKITPEEEER. Low complexity-rich tracts occupy residues 262–292, 442–455, and 469–482; these read STPR…SSLT, DFNL…NNNN, and TTTT…NNNN. Residues 483-494 show a composition bias toward polar residues; that stretch reads ISPQHSGTSGSP. 2 stretches are compositionally biased toward low complexity: residues 603–622 and 943–966; these read TTQL…TSQP and NNNS…SDSN. The 270-residue stretch at 779 to 1048 folds into the Rap-GAP domain; the sequence is LIQFEAKNIH…RTRKEFLHSF (270 aa).

Its subcellular location is the cytoplasm. It is found in the cell cortex. Mediates the deactivation of rap1 and plays an important role in spatially and temporally regulating cell adhesion and chemotaxis by controlling attachment disassembly in the leading edge through the regulation of myosin II assembly and disassembly. Overexpression leads to defective chemotaxis. The chain is RapA guanosine triphosphatase-activating protein 1 (rapgap1) from Dictyostelium discoideum (Social amoeba).